Here is a 557-residue protein sequence, read N- to C-terminus: Probable asparagine synthetase [glutamine-hydrolyzing] (557 aa).

C2 acts as the For GATase activity in catalysis. A Glutamine amidotransferase type-2 domain is found at C2 to K188. L-glutamine-binding positions include R50–V54, N75–E77, and D99. The Asparagine synthetase domain occupies P196–R531. ATP contacts are provided by residues L235, I280, and S354–G355. Phosphoserine occurs at positions 391 and 489.

Its subcellular location is the cytoplasm. The protein localises to the nucleus. The enzyme catalyses L-aspartate + L-glutamine + ATP + H2O = L-asparagine + L-glutamate + AMP + diphosphate + H(+). It participates in amino-acid biosynthesis; L-asparagine biosynthesis; L-asparagine from L-aspartate (L-Gln route): step 1/1. In Schizosaccharomyces pombe (strain 972 / ATCC 24843) (Fission yeast), this protein is Probable asparagine synthetase [glutamine-hydrolyzing] (asn1).